The following is a 92-amino-acid chain: Small ribosomal subunit protein uS19 (92 aa).

The protein belongs to the universal ribosomal protein uS19 family.

Protein S19 forms a complex with S13 that binds strongly to the 16S ribosomal RNA. The sequence is that of Small ribosomal subunit protein uS19 from Proteus mirabilis (strain HI4320).